Reading from the N-terminus, the 422-residue chain is Adenylosuccinate synthetase (422 aa).

Residues 11 to 17 (GDEGKGK) and 39 to 41 (GHT) each bind GTP. Asp12 (proton acceptor) is an active-site residue. The Mg(2+) site is built by Asp12 and Gly39. Residues 12–15 (DEGK), 37–40 (NAGH), Thr129, Arg143, Asn219, Thr234, and Arg298 contribute to the IMP site. His40 functions as the Proton donor in the catalytic mechanism. 294-300 (VTTGRRR) provides a ligand contact to substrate. Residues Arg300, 326–328 (KLD), and 409–411 (GTG) each bind GTP.

Belongs to the adenylosuccinate synthetase family. As to quaternary structure, homodimer. It depends on Mg(2+) as a cofactor.

Its subcellular location is the cytoplasm. It catalyses the reaction IMP + L-aspartate + GTP = N(6)-(1,2-dicarboxyethyl)-AMP + GDP + phosphate + 2 H(+). The protein operates within purine metabolism; AMP biosynthesis via de novo pathway; AMP from IMP: step 1/2. Its function is as follows. Plays an important role in the de novo pathway and in the salvage pathway of purine nucleotide biosynthesis. Catalyzes the first committed step in the biosynthesis of AMP from IMP. The protein is Adenylosuccinate synthetase of Blastomyces gilchristii (strain SLH14081) (Blastomyces dermatitidis).